The chain runs to 987 residues: Eukaryotic translation initiation factor 3 subunit A (987 aa).

Residues 93–122 adopt a coiled-coil conformation; the sequence is LHLATDKAEQARSQADALEEALDVDDLEAD. Positions 316-513 constitute a PCI domain; sequence LQLIASSVVL…GVVIFGNLGI (198 aa). 2 coiled-coil regions span residues 556 to 742 and 797 to 858; these read TVEK…EKNR and LKIE…REEL. The span at 808-859 shows a compositional bias: basic and acidic residues; it reads QEEEEARKQEEAERLKKVEAERKANLDKAFEKQRQREIELEEKSRREREELL. The interval 808 to 987 is disordered; the sequence is QEEEEARKQE…GSSRPRPTQR (180 aa). A compositionally biased stretch (low complexity) spans 872–894; that stretch reads PTVTPVGTTAPAAAAAAAGAPAA. Polar residues-rich tracts occupy residues 905-916 and 976-987; these read TEVSGPSAPTSS and TFGSSRPRPTQR.

This sequence belongs to the eIF-3 subunit A family. In terms of assembly, component of the eukaryotic translation initiation factor 3 (eIF-3) complex. Binds to the translation initiation factor TIF3H1.

It localises to the cytoplasm. In terms of biological role, RNA-binding component of the eukaryotic translation initiation factor 3 (eIF-3) complex, which is involved in protein synthesis of a specialized repertoire of mRNAs and, together with other initiation factors, stimulates binding of mRNA and methionyl-tRNAi to the 40S ribosome. The eIF-3 complex specifically targets and initiates translation of a subset of mRNAs involved in cell proliferation. This is Eukaryotic translation initiation factor 3 subunit A (TIF3A1) from Arabidopsis thaliana (Mouse-ear cress).